The chain runs to 202 residues: Holliday junction branch migration complex subunit RuvA (202 aa).

A domain I region spans residues 1–64 (MIGYLKGQIL…YDGTVLYGFL (64 aa)). The interval 65–146 (TKEDKQLWAI…AVTIAGVPKI (82 aa)) is domain II. Residues 147–155 (KIEGEAPFM) form a flexible linker region. The domain III stretch occupies residues 155–202 (MSEVMMALTALGYSPMEARKAIDQLYKTGLANDSVENIIRAALRILKK).

Belongs to the RuvA family. In terms of assembly, homotetramer. Forms an RuvA(8)-RuvB(12)-Holliday junction (HJ) complex. HJ DNA is sandwiched between 2 RuvA tetramers; dsDNA enters through RuvA and exits via RuvB. An RuvB hexamer assembles on each DNA strand where it exits the tetramer. Each RuvB hexamer is contacted by two RuvA subunits (via domain III) on 2 adjacent RuvB subunits; this complex drives branch migration. In the full resolvosome a probable DNA-RuvA(4)-RuvB(12)-RuvC(2) complex forms which resolves the HJ.

The protein resides in the cytoplasm. Functionally, the RuvA-RuvB-RuvC complex processes Holliday junction (HJ) DNA during genetic recombination and DNA repair, while the RuvA-RuvB complex plays an important role in the rescue of blocked DNA replication forks via replication fork reversal (RFR). RuvA specifically binds to HJ cruciform DNA, conferring on it an open structure. The RuvB hexamer acts as an ATP-dependent pump, pulling dsDNA into and through the RuvAB complex. HJ branch migration allows RuvC to scan DNA until it finds its consensus sequence, where it cleaves and resolves the cruciform DNA. The chain is Holliday junction branch migration complex subunit RuvA from Elusimicrobium minutum (strain Pei191).